Here is a 235-residue protein sequence, read N- to C-terminus: BPI fold-containing family A member 2 (235 aa).

An N-terminal signal peptide occupies residues 1 to 20; sequence MFQLGSLVVLCGLLIGTSES. Cysteine 161 and cysteine 204 are oxidised to a cystine.

Belongs to the BPI/LBP/Plunc superfamily. Plunc family. Expressed in parotid, submandibular and sublingual glands.

The protein localises to the secreted. Functionally, has strong antibacterial activity against P.aeruginosa. This Rattus norvegicus (Rat) protein is BPI fold-containing family A member 2 (Bpifa2).